We begin with the raw amino-acid sequence, 950 residues long: Voltage-gated inwardly rectifying potassium channel KCNH6 (950 aa).

Topologically, residues 1–261 (MPVRRGHVAP…YSPFKAVWDW (261 aa)) are cytoplasmic. The PAS domain maps to 41–70 (IIYCNDGFCELFGYSRVEVMQRPCTCDFLT). The PAC domain maps to 92–144 (CKVDILYYRKDASSFRCLVDVVPVKNEDGAVIMFILNFEDLAQLLAKSSSRSL). The disordered stretch occupies residues 154-174 (LGSEGSHSRPSGQGPGPGRGK). The chain crosses the membrane as a helical span at residues 262 to 282 (LILLLVIYTAVFTPYSAAFLL). Residues 283–298 (SDQDESQRGTCGYTCS) are Extracellular-facing. Residues 299-319 (PLTVVDLIVDIMFVVDIVINF) form a helical membrane-spanning segment. Over 320–340 (RTTYVNTNDEVVSHPRRIAVH) the chain is Cytoplasmic. The chain crosses the membrane as a helical span at residues 341–361 (YFKGWFLIDMVAAIPFDLLIF). Over 362–370 (RTGSDETTT) the chain is Extracellular. A helical; Voltage-sensor transmembrane segment spans residues 371–391 (LIGLLKTARLLRLVRVARKLD). The Cytoplasmic portion of the chain corresponds to 392-398 (RYSEYGA). The chain crosses the membrane as a helical span at residues 399-419 (AVLFLLMCTFALIAHWLACIW). Residues 420-463 (YAIGNVERPYLEPKIGWLDSLGAQLGKQYNGSDPASGPSVQDKY) are Extracellular-facing. An intramembrane region (pore-forming) is located at residues 464-484 (VTALYFTFSSLTSVGFGNVSP). The short motif at 476-481 (SVGFGN) is the Selectivity filter element. At 485–490 (NTNSEK) the chain is on the extracellular side. A helical transmembrane segment spans residues 491–511 (VFSICVMLIGSLMYASIFGNV). The Cytoplasmic portion of the chain corresponds to 512–950 (SAIIQRLYSG…HGSDPGFTRS (439 aa)). Residues 594-694 (AFRGASKGCL…IHRADLLEVL (101 aa)) are cNMP-binding domain. 2 disordered regions span residues 719–750 (GGLQ…APSL) and 890–950 (VPSS…FTRS). Residues 740 to 750 (NDSQSGAAPSL) show a composition bias toward polar residues. The segment covering 898–912 (PGGLLSPLASPLRPL) has biased composition (low complexity).

This sequence belongs to the potassium channel family. H (Eag) (TC 1.A.1.20) subfamily. Kv11.2/KCNH6 sub-subfamily. In terms of assembly, the potassium channel is probably composed of a homo- or heterotetrameric complex of pore-forming alpha subunits that can associate only within their subfamily. Highly expressed in celiac and superior mesenteric ganglia, but not detected in brain or in heart. Detected at low levels in retina. Also found in pituitary. Also found in the olfactory bulb (granular and mitral cell layers).

The protein localises to the cell membrane. The catalysed reaction is K(+)(in) = K(+)(out). In terms of biological role, pore-forming (alpha) subunit of voltage-gated inwardly rectifying potassium channel. Characterized by unusual gating kinetics by producing relatively small outward currents during membrane depolarization and large inward currents during subsequent repolarization which reflect a rapid inactivation during depolarization and quick recovery from inactivation but slow deactivation (closing) during repolarization. Activates even more slowly than KCNH2. The sequence is that of Voltage-gated inwardly rectifying potassium channel KCNH6 from Rattus norvegicus (Rat).